A 459-amino-acid polypeptide reads, in one-letter code: Ribosomal protein uS12 methylthiotransferase RimO (459 aa).

The region spanning 11-126 (PKVGMVSLGC…VMQAVHSHLP (116 aa)) is the MTTase N-terminal domain. [4Fe-4S] cluster-binding residues include C20, C56, C85, C157, C161, and C164. Residues 143–388 (LTPRHYAYLK…MEVAEEVSAA (246 aa)) form the Radical SAM core domain. Residues 391-459 (ARKVGKTLKV…ADGHDLWGEV (69 aa)) enclose the TRAM domain.

It belongs to the methylthiotransferase family. RimO subfamily. [4Fe-4S] cluster serves as cofactor.

It is found in the cytoplasm. The catalysed reaction is L-aspartate(89)-[ribosomal protein uS12]-hydrogen + (sulfur carrier)-SH + AH2 + 2 S-adenosyl-L-methionine = 3-methylsulfanyl-L-aspartate(89)-[ribosomal protein uS12]-hydrogen + (sulfur carrier)-H + 5'-deoxyadenosine + L-methionine + A + S-adenosyl-L-homocysteine + 2 H(+). Catalyzes the methylthiolation of an aspartic acid residue of ribosomal protein uS12. This chain is Ribosomal protein uS12 methylthiotransferase RimO, found in Burkholderia pseudomallei (strain K96243).